Reading from the N-terminus, the 160-residue chain is Transcription antitermination protein NusB (160 aa).

This sequence belongs to the NusB family.

Involved in transcription antitermination. Required for transcription of ribosomal RNA (rRNA) genes. Binds specifically to the boxA antiterminator sequence of the ribosomal RNA (rrn) operons. This chain is Transcription antitermination protein NusB, found in Rhizobium meliloti (strain 1021) (Ensifer meliloti).